A 222-amino-acid chain; its full sequence is Deoxyribose-phosphate aldolase (222 aa).

Residue aspartate 91 is the Proton donor/acceptor of the active site. Lysine 153 acts as the Schiff-base intermediate with acetaldehyde in catalysis. The Proton donor/acceptor role is filled by lysine 182.

This sequence belongs to the DeoC/FbaB aldolase family. DeoC type 1 subfamily.

The protein localises to the cytoplasm. The enzyme catalyses 2-deoxy-D-ribose 5-phosphate = D-glyceraldehyde 3-phosphate + acetaldehyde. It functions in the pathway carbohydrate degradation; 2-deoxy-D-ribose 1-phosphate degradation; D-glyceraldehyde 3-phosphate and acetaldehyde from 2-deoxy-alpha-D-ribose 1-phosphate: step 2/2. Functionally, catalyzes a reversible aldol reaction between acetaldehyde and D-glyceraldehyde 3-phosphate to generate 2-deoxy-D-ribose 5-phosphate. The sequence is that of Deoxyribose-phosphate aldolase from Mycoplasma capricolum subsp. capricolum (strain California kid / ATCC 27343 / NCTC 10154).